Consider the following 382-residue polypeptide: Fimbrial usher domain-containing protein YdeT (382 aa).

The protein is Fimbrial usher domain-containing protein YdeT (ydeT) of Escherichia coli (strain K12).